The sequence spans 462 residues: Phosphoglycerate kinase, chloroplastic (462 aa).

A chloroplast-targeting transit peptide spans 1–61 (MALSMKMRAN…AGRSRIVVEA (61 aa)). The (2R)-3-phosphoglycerate site is built by Ala83, Asp84, Asn86, Arg101, Ser123, His124, Gly126, Arg127, Arg183, His215, and Arg216. Gly261 is an ADP binding site. Gly261 lines the CDP pocket. AMP is bound by residues Lys263 and Lys267. Position 267 (Lys267) interacts with ATP. ADP is bound at residue Gly285. Position 285 (Gly285) interacts with CDP. 2 residues coordinate AMP: Gly286 and Gly358. The ATP site is built by Gly286 and Gly358. Residues Gly383 and Phe388 each coordinate CDP. Phe388 is a binding site for ADP. Glu389 provides a ligand contact to AMP. Positions 389, 420, and 421 each coordinate ATP. A Mg(2+)-binding site is contributed by Asp420.

This sequence belongs to the phosphoglycerate kinase family. Monomer. Requires Mg(2+) as cofactor.

It localises to the plastid. The protein resides in the chloroplast. The catalysed reaction is (2R)-3-phosphoglycerate + ATP = (2R)-3-phospho-glyceroyl phosphate + ADP. Its pathway is carbohydrate biosynthesis; Calvin cycle. The chain is Phosphoglycerate kinase, chloroplastic (PGK) from Volvox carteri (Green alga).